Consider the following 337-residue polypeptide: Cathepsin L-like (337 aa).

Residues 1 to 18 (MNRFILLALVAAVVAVNS) form the signal peptide. A propeptide spans 19–119 (AKLSRQIESA…SSFLAPFNVQ (101 aa)) (activation peptide). N-linked (GlcNAc...) asparagine glycosylation occurs at asparagine 108. 3 disulfides stabilise this stretch: cysteine 141–cysteine 184, cysteine 175–cysteine 217, and cysteine 276–cysteine 326. Cysteine 144 is a catalytic residue. Active-site residues include histidine 283 and asparagine 304.

It belongs to the peptidase C1 family. Expressed in intestine, pharynx posterior bulb, hypodermis and cuticle (at protein level). Expressed in germ cells, developing oocytes, sheath cells surrounding germ cells and oocytes, and in the eggshell (at protein level).

It is found in the secreted. Its subcellular location is the cytoplasmic granule. The protein localises to the lysosome. The protein resides in the endosome. It localises to the cytoplasmic vesicle. It is found in the phagosome. The enzyme catalyses Specificity close to that of papain. As compared to cathepsin B, cathepsin L exhibits higher activity toward protein substrates, but has little activity on Z-Arg-Arg-NHMec, and no peptidyl-dipeptidase activity.. In terms of biological role, cysteine protease which plays an essential role in the degradation of proteins in lysosomes. During early embryogenesis, maternally required for the proteolytic processing of yolk proteins in platelets, a lysosome-like structure where a slow and controlled degradation of yolk proteins occurs. In the gonad, required for the clearance of apoptotic germ cells in the engulfing cell phagolysosomes. In embryos, required for the degradation of endocytic and autophagic cargos. In embryos, may play a role in the degradation of lipid-containing droplets. Required for larval development. The polypeptide is Cathepsin L-like (Caenorhabditis elegans).